Here is a 317-residue protein sequence, read N- to C-terminus: Transaldolase (317 aa).

Lysine 132 (schiff-base intermediate with substrate) is an active-site residue.

It belongs to the transaldolase family. Type 1 subfamily. In terms of assembly, homodimer.

The protein resides in the cytoplasm. The catalysed reaction is D-sedoheptulose 7-phosphate + D-glyceraldehyde 3-phosphate = D-erythrose 4-phosphate + beta-D-fructose 6-phosphate. The protein operates within carbohydrate degradation; pentose phosphate pathway; D-glyceraldehyde 3-phosphate and beta-D-fructose 6-phosphate from D-ribose 5-phosphate and D-xylulose 5-phosphate (non-oxidative stage): step 2/3. Transaldolase is important for the balance of metabolites in the pentose-phosphate pathway. The chain is Transaldolase from Actinobacillus succinogenes (strain ATCC 55618 / DSM 22257 / CCUG 43843 / 130Z).